The primary structure comprises 366 residues: Beta sliding clamp (366 aa).

The protein belongs to the beta sliding clamp family. Forms a ring-shaped head-to-tail homodimer around DNA which binds and tethers DNA polymerases and other proteins to the DNA. The DNA replisome complex has a single clamp-loading complex (3 tau and 1 each of delta, delta', psi and chi subunits) which binds 3 Pol III cores (1 core on the leading strand and 2 on the lagging strand) each with a beta sliding clamp dimer. Additional proteins in the replisome are other copies of gamma, psi and chi, Ssb, DNA helicase and RNA primase.

Its subcellular location is the cytoplasm. Its function is as follows. Confers DNA tethering and processivity to DNA polymerases and other proteins. Acts as a clamp, forming a ring around DNA (a reaction catalyzed by the clamp-loading complex) which diffuses in an ATP-independent manner freely and bidirectionally along dsDNA. Initially characterized for its ability to contact the catalytic subunit of DNA polymerase III (Pol III), a complex, multichain enzyme responsible for most of the replicative synthesis in bacteria; Pol III exhibits 3'-5' exonuclease proofreading activity. The beta chain is required for initiation of replication as well as for processivity of DNA replication. This is Beta sliding clamp (dnaN) from Vibrio cholerae serotype O1 (strain ATCC 39315 / El Tor Inaba N16961).